Consider the following 360-residue polypeptide: D-alanine--D-alanine ligase (360 aa).

An ATP-grasp domain is found at 149-353 (KKLMAAEGLP…YEELLDVLVQ (205 aa)). 176–231 (KNLLGLPVFVKPARGGSSIGISRVTAWEDFNKAVGLARAHDEKVIVESEIVGSEVE) serves as a coordination point for ATP. Residues aspartate 308, glutamate 320, and asparagine 322 each coordinate Mg(2+).

The protein belongs to the D-alanine--D-alanine ligase family. The cofactor is Mg(2+). It depends on Mn(2+) as a cofactor.

It localises to the cytoplasm. It carries out the reaction 2 D-alanine + ATP = D-alanyl-D-alanine + ADP + phosphate + H(+). It participates in cell wall biogenesis; peptidoglycan biosynthesis. Cell wall formation. The polypeptide is D-alanine--D-alanine ligase (Corynebacterium glutamicum (strain R)).